The following is a 463-amino-acid chain: Putative WAS protein family homolog 3 (463 aa).

The interval 1–54 is required for WASH complex assembly; that stretch reads MTPVRMQHSLAGQTYAVPLIQPDLRREEAVQQMADALQYLQKVSGDIFSRISQQ. The WHD1 stretch occupies residues 1–165; it reads MTPVRMQHSL…EGLGGLPSNI (165 aa). A Glycyl lysine isopeptide (Lys-Gly) (interchain with G-Cter in ubiquitin) cross-link involves residue Lys-218. Positions 295 to 463 are disordered; that stretch reads QDGVLTPPPP…AEEDEDDWES (169 aa). A compositionally biased stretch (pro residues) spans 300-312; sequence TPPPPPPPPPPAP. The VCA stretch occupies residues 347-463; the sequence is QGAPREVVDP…AEEDEDDWES (117 aa). Residues 359 to 381 form the WH2 domain; sequence GRATLLESIRQAGGIGKAKLRSM. Basic and acidic residues predominate over residues 380–396; that stretch reads SMKERKLEKKQQKEQEQ. Over residues 422 to 434 the composition is skewed to gly residues; the sequence is SGKGPGAGEGPGG. Residues 454 to 463 show a composition bias toward acidic residues; sequence AEEDEDDWES.

Belongs to the WASH1 family. In terms of assembly, component of the WASH core complex also described as WASH regulatory complex (SHRC) composed of WASH (WASHC1, WASH2P or WASH3P), WASHC2 (WASHC2A or WASHC2C), WASHC3, WASHC4 and WASHC5. The WASH core complex associates with the F-actin-capping protein dimer (formed by CAPZA1, CAPZA2 or CAPZA3 and CAPZB) in a transient or substoichiometric manner which was initially described as WASH complex. Interacts (via WHD1 region) with WASHC2C; the interaction is direct. Interacts with alpha-tubulin. Interacts with BECN1; WASHC1 and AMBRA1 can competitively interact with BECN1. Interacts with BLOC1S2; may associate with the BLOC-1 complex. Interacts with tubulin gamma chain (TUBG1 or TUBG2). Interacts with EXOC1, EXOC4, EXOC8; in MMP14-positive endosomes in breast tumor cells; indicative for an association with the exocyst complex.

It is found in the early endosome. It localises to the early endosome membrane. The protein localises to the recycling endosome membrane. Its subcellular location is the cell projection. The protein resides in the lamellipodium. It is found in the filopodium. It localises to the cytoplasmic vesicle. The protein localises to the autophagosome. Its subcellular location is the cytoplasm. The protein resides in the cytoskeleton. It is found in the microtubule organizing center. It localises to the centrosome. The protein localises to the centriole. Its function is as follows. Acts as a nucleation-promoting factor at the surface of endosomes, where it recruits and activates the Arp2/3 complex to induce actin polymerization, playing a key role in the fission of tubules that serve as transport intermediates during endosome sorting. Involved in endocytic trafficking of EGF. Involved in transferrin receptor recycling. Regulates the trafficking of endosomal alpha5beta1 integrin to the plasma membrane and involved in invasive cell migration. In T-cells involved in endosome-to-membrane recycling of receptors including T-cell receptor (TCR), CD28 and ITGAL; proposed to be implicated in T cell proliferation and effector function. In dendritic cells involved in endosome-to-membrane recycling of major histocompatibility complex (MHC) class II probably involving retromer and subsequently allowing antigen sampling, loading and presentation during T-cell activation. Involved in Arp2/3 complex-dependent actin assembly driving Salmonella typhimurium invasion independent of ruffling. Involved in the exocytosis of MMP14 leading to matrix remodeling during invasive migration and implicating late endosome-to-plasma membrane tubular connections and cooperation with the exocyst complex. Involved in negative regulation of autophagy independently from its role in endosomal sorting by inhibiting BECN1 ubiquitination to inactivate PIK3C3/Vps34 activity. The sequence is that of Putative WAS protein family homolog 3 (WASH3P) from Homo sapiens (Human).